A 294-amino-acid chain; its full sequence is Ventral anterior homeobox 2b (294 aa).

The span at 1–10 shows a compositional bias: basic and acidic residues; that stretch reads MGDGVSEERS. Disordered stretches follow at residues 1 to 27, 43 to 65, 149 to 168, 190 to 223, and 272 to 294; these read MGDG…VRDR, KDIP…DSQS, RRTK…SSST, PAPP…PVIS, and SSAF…KSTS. Positions 98–157 form a DNA-binding region, homeobox; the sequence is PKRTRTSFTAEQLYRLELEFQRCQYVVGRERTELARQLNLSETQVKVWFQNRRTKQKKDQ. Residues 154 to 165 show a composition bias toward basic and acidic residues; it reads KKDQSRDSEKRS. Residues 197–219 show a composition bias toward low complexity; the sequence is SSQNNMGTSSGNGTSLGTSGSTS. The span at 279-288 shows a compositional bias: basic and acidic residues; the sequence is TRLDRKDTAS.

It belongs to the EMX homeobox family.

The protein localises to the nucleus. Transcription factor that may function in dorsoventral specification of the forebrain. Regulates the expression of Wnt signaling antagonists. The sequence is that of Ventral anterior homeobox 2b (vax2-b) from Xenopus laevis (African clawed frog).